Here is a 177-residue protein sequence, read N- to C-terminus: Interleukin-1 receptor antagonist protein (177 aa).

A signal peptide spans 1-25 (MRPSRSTRRHLISLLLFLFHSETAC). A disulfide bond links Cys-91 and Cys-141. N-linked (GlcNAc...) asparagine glycosylation occurs at Asn-109.

Belongs to the IL-1 family.

It is found in the secreted. Anti-inflammatory antagonist of interleukin-1 family of proinflammatory cytokines such as interleukin-1beta/IL1B and interleukin-1alpha/IL1A. Protects from immune dysregulation and uncontrolled systemic inflammation triggered by IL1 for a range of innate stimulatory agents such as pathogens. The chain is Interleukin-1 receptor antagonist protein (IL1RN) from Oryctolagus cuniculus (Rabbit).